Reading from the N-terminus, the 496-residue chain is Glycerol kinase (496 aa).

An ADP-binding site is contributed by T12. ATP-binding residues include T12, T13, and S14. Position 12 (T12) interacts with sn-glycerol 3-phosphate. R16 serves as a coordination point for ADP. Residues R82, E83, and Y134 each contribute to the sn-glycerol 3-phosphate site. R82, E83, and Y134 together coordinate glycerol. The residue at position 230 (H230) is a Phosphohistidine; by HPr. D244 is a sn-glycerol 3-phosphate binding site. Glycerol-binding residues include D244 and Q245. The ADP site is built by T266 and G309. Positions 266, 309, 313, and 410 each coordinate ATP. ADP is bound by residues G410 and N414.

The protein belongs to the FGGY kinase family. Homotetramer and homodimer (in equilibrium). The phosphoenolpyruvate-dependent sugar phosphotransferase system (PTS), including enzyme I, and histidine-containing protein (HPr) are required for the phosphorylation, which leads to the activation of the enzyme.

The enzyme catalyses glycerol + ATP = sn-glycerol 3-phosphate + ADP + H(+). The protein operates within polyol metabolism; glycerol degradation via glycerol kinase pathway; sn-glycerol 3-phosphate from glycerol: step 1/1. With respect to regulation, activated by phosphorylation and inhibited by fructose 1,6-bisphosphate (FBP). Its function is as follows. Key enzyme in the regulation of glycerol uptake and metabolism. Catalyzes the phosphorylation of glycerol to yield sn-glycerol 3-phosphate. This is Glycerol kinase from Geobacillus sp. (strain WCH70).